The sequence spans 122 residues: Large ribosomal subunit protein uL14c (122 aa).

The protein belongs to the universal ribosomal protein uL14 family. As to quaternary structure, part of the 50S ribosomal subunit.

It is found in the plastid. It localises to the chloroplast. Binds to 23S rRNA. The chain is Large ribosomal subunit protein uL14c from Vitis vinifera (Grape).